We begin with the raw amino-acid sequence, 771 residues long: Hyperosmolality-gated Ca2+ permeable channel 1.3 (771 aa).

The chain crosses the membrane as a helical span at residues 7 to 27 (IGVAAAINILTAIIFLLAFAI). Ser54 carries the post-translational modification Phosphoserine. 9 helical membrane-spanning segments follow: residues 101 to 121 (IYLIGLKIFVPIALLAWSILV), 158 to 178 (FWTHLVMAYAFTFWTCYVLMK), 375 to 395 (LIMHIAFFFLTFFFMIPIAFV), 427 to 447 (FLPGIVLKLFLIFLPSILMVM), 467 to 487 (YYIFNLINVFLGSVITGSAFE), 512 to 532 (ATFFITYIMVDGWAGIAGEIL), 584 to 604 (PVTPVLLPFIIIFFALAYLVF), 630 to 650 (IISALIIAQILLMGLLSTKGA), and 651 to 671 (AQSTPFLLFLPIITFFFHRYC). Residues 744 to 771 (VPTKRQSRINTPAVSHASRGSSRSPPSK) are disordered. The span at 751 to 771 (RINTPAVSHASRGSSRSPPSK) shows a compositional bias: polar residues.

The protein belongs to the CSC1 (TC 1.A.17) family. Phosphorylated at Ser-54 by BIK1 in response to pathogen-associated molecular pattern (PAMP) perception, promoting its activation. Preferentially expressed in guard cells.

Its subcellular location is the cell membrane. The catalysed reaction is Ca(2+)(in) = Ca(2+)(out). Its activity is regulated as follows. Activated following phosphorylation at Ser-54 by BIK1. Functionally, calcium-permeable channel that plays a key role in plant stomatal immunity. In response to pathogen-associated molecular pattern (PAMP) perception, phosphorylated and activated by BIK1, triggering rapid influx of calcium ions across the plasma membrane, leading to stomatal closure. This Arabidopsis thaliana (Mouse-ear cress) protein is Hyperosmolality-gated Ca2+ permeable channel 1.3.